The sequence spans 145 residues: Bacilliredoxin SAR1441 (145 aa).

This sequence belongs to the bacilliredoxin family.

This chain is Bacilliredoxin SAR1441, found in Staphylococcus aureus (strain MRSA252).